Consider the following 497-residue polypeptide: Probable cytosol aminopeptidase (497 aa).

Residues K264 and D269 each coordinate Mn(2+). K276 is a catalytic residue. D287, D346, and E348 together coordinate Mn(2+). Residue R350 is part of the active site.

This sequence belongs to the peptidase M17 family. Mn(2+) serves as cofactor.

The protein localises to the cytoplasm. The catalysed reaction is Release of an N-terminal amino acid, Xaa-|-Yaa-, in which Xaa is preferably Leu, but may be other amino acids including Pro although not Arg or Lys, and Yaa may be Pro. Amino acid amides and methyl esters are also readily hydrolyzed, but rates on arylamides are exceedingly low.. The enzyme catalyses Release of an N-terminal amino acid, preferentially leucine, but not glutamic or aspartic acids.. Its function is as follows. Presumably involved in the processing and regular turnover of intracellular proteins. Catalyzes the removal of unsubstituted N-terminal amino acids from various peptides. This is Probable cytosol aminopeptidase from Persephonella marina (strain DSM 14350 / EX-H1).